The chain runs to 88 residues: Large ribosomal subunit protein bL31B (88 aa).

The protein belongs to the bacterial ribosomal protein bL31 family. Type B subfamily. Part of the 50S ribosomal subunit.

This chain is Large ribosomal subunit protein bL31B, found in Paraburkholderia phytofirmans (strain DSM 17436 / LMG 22146 / PsJN) (Burkholderia phytofirmans).